Reading from the N-terminus, the 197-residue chain is Putative manganese efflux pump MntP (197 aa).

6 helical membrane-spanning segments follow: residues 8–28 (VILL…GLGA), 43–63 (VYAA…GYLL), 66–86 (VLLG…LIVL), 123–143 (LAIA…LLAL), 146–166 (WLAC…GIYL), and 177–197 (KAEI…MLFS).

This sequence belongs to the MntP (TC 9.B.29) family.

The protein resides in the cell inner membrane. Functionally, probably functions as a manganese efflux pump. This is Putative manganese efflux pump MntP from Psychrobacter arcticus (strain DSM 17307 / VKM B-2377 / 273-4).